The chain runs to 870 residues: Glycerol-3-phosphate acyltransferase (870 aa).

The interval 1–27 (MPKKNSPLLPKETTPTQSSVDTSGSSN) is disordered. Positions 13–27 (TTPTQSSVDTSGSSN) are enriched in polar residues. Positions 351–356 (HRSHID) match the HXXXXD motif motif.

It belongs to the GPAT/DAPAT family.

Its subcellular location is the cell inner membrane. The catalysed reaction is sn-glycerol 3-phosphate + an acyl-CoA = a 1-acyl-sn-glycero-3-phosphate + CoA. Its pathway is phospholipid metabolism; CDP-diacylglycerol biosynthesis; CDP-diacylglycerol from sn-glycerol 3-phosphate: step 1/3. In Xylella fastidiosa (strain 9a5c), this protein is Glycerol-3-phosphate acyltransferase (plsB).